Consider the following 211-residue polypeptide: MSDQVKIPRATLKRLPLYYRFVSSLKSKGIDRVNSKAISDALQIDSATIRRDFSYFGELGKKGYGYNIDSLLDFFKSELSESDMIKIAIVGVGNLGKALLTYNFSIHDDMTITEAFDVKEDVIGQKIGNVIVKDNDELITTLKKEEIDVVILTTPERVAQKVADELVQAGVKGILNFTPGRINTPSDVQVHQIDLGIELQSLLFFMKNYSE.

A DNA-binding region (H-T-H motif) is located at residues 17-56 (LYYRFVSSLKSKGIDRVNSKAISDALQIDSATIRRDFSYF). An NAD(+)-binding site is contributed by 91 to 96 (GVGNLG).

This sequence belongs to the transcriptional regulatory Rex family. Homodimer.

The protein resides in the cytoplasm. Its function is as follows. Modulates transcription in response to changes in cellular NADH/NAD(+) redox state. This is Redox-sensing transcriptional repressor Rex from Staphylococcus aureus (strain Mu3 / ATCC 700698).